The primary structure comprises 836 residues: Homeobox-leucine zipper protein ATHB-15 (836 aa).

The homeobox DNA-binding region spans 14–77 (DNGKYVRYTP…NRRCREKQRK (64 aa)). Residues 72-115 (REKQRKEASRLQAVNRKLTAMNKLLMEENDRLQKQVSQLVHENS) adopt a coiled-coil conformation. The START domain maps to 151–379 (RDASPAGLLS…IAQEVTQTNS (229 aa)).

Belongs to the HD-ZIP homeobox family. Class III subfamily. Interacts with ESR1 and ESR2. Interacts with ZPR3. Highly expressed the developing vascular elements and the adaxial portion of cotyledons. Expressed in developing ovules, stamens and carpels. Expressed in procambium and shoot meristem.

The protein resides in the nucleus. In terms of biological role, probable transcription factor involved in the regulation of meristem development to promote lateral organ formation. May regulates procambial and vascular tissue formation or maintenance, and vascular development in inflorescence stems. The chain is Homeobox-leucine zipper protein ATHB-15 (ATHB-15) from Arabidopsis thaliana (Mouse-ear cress).